A 631-amino-acid chain; its full sequence is tRNA uridine 5-carboxymethylaminomethyl modification enzyme MnmG (631 aa).

Residues 13 to 18 (GGGHAG), Val-125, and Ser-180 each bind FAD. 273 to 287 (GPRYCPSIEDKVMRF) lines the NAD(+) pocket. Gln-370 provides a ligand contact to FAD.

This sequence belongs to the MnmG family. As to quaternary structure, homodimer. Heterotetramer of two MnmE and two MnmG subunits. The cofactor is FAD.

It is found in the cytoplasm. NAD-binding protein involved in the addition of a carboxymethylaminomethyl (cmnm) group at the wobble position (U34) of certain tRNAs, forming tRNA-cmnm(5)s(2)U34. In Vibrio parahaemolyticus serotype O3:K6 (strain RIMD 2210633), this protein is tRNA uridine 5-carboxymethylaminomethyl modification enzyme MnmG.